Reading from the N-terminus, the 154-residue chain is SsrA-binding protein (154 aa).

Positions 134–154 are disordered; sequence ETLRRRDAKREVERALKEKNR.

It belongs to the SmpB family.

The protein localises to the cytoplasm. Its function is as follows. Required for rescue of stalled ribosomes mediated by trans-translation. Binds to transfer-messenger RNA (tmRNA), required for stable association of tmRNA with ribosomes. tmRNA and SmpB together mimic tRNA shape, replacing the anticodon stem-loop with SmpB. tmRNA is encoded by the ssrA gene; the 2 termini fold to resemble tRNA(Ala) and it encodes a 'tag peptide', a short internal open reading frame. During trans-translation Ala-aminoacylated tmRNA acts like a tRNA, entering the A-site of stalled ribosomes, displacing the stalled mRNA. The ribosome then switches to translate the ORF on the tmRNA; the nascent peptide is terminated with the 'tag peptide' encoded by the tmRNA and targeted for degradation. The ribosome is freed to recommence translation, which seems to be the essential function of trans-translation. The polypeptide is SsrA-binding protein (Halalkalibacterium halodurans (strain ATCC BAA-125 / DSM 18197 / FERM 7344 / JCM 9153 / C-125) (Bacillus halodurans)).